The following is a 650-amino-acid chain: Putative lipase atg15 (650 aa).

At 1-11 (MKSSRKRTKRR) the chain is on the cytoplasmic side. The chain crosses the membrane as a helical; Signal-anchor for type II membrane protein span at residues 12–32 (VLQDMSISGLLLSVALLPSVV). Over 33–650 (SAQDHVYLDP…CVGSTGTELR (618 aa)) the chain is Lumenal. Residues asparagine 165, asparagine 200, asparagine 222, asparagine 280, and asparagine 304 are each glycosylated (N-linked (GlcNAc...) asparagine). Serine 320 acts as the Charge relay system in catalysis. N-linked (GlcNAc...) asparagine glycosylation occurs at asparagine 466.

The protein belongs to the AB hydrolase superfamily. Lipase family. Binds to both phosphatidylinositol (PI) and phosphatidylinositol 3,5-bisphosphate (PIP2).

It localises to the endosome. Its subcellular location is the multivesicular body membrane. It is found in the prevacuolar compartment membrane. It carries out the reaction a triacylglycerol + H2O = a diacylglycerol + a fatty acid + H(+). Lipase which is essential for lysis of subvacuolar cytoplasm to vacuole targeted bodies and intravacuolar autophagic bodies. Involved in the lysis of intravacuolar multivesicular body (MVB) vesicles. The intravacuolar membrane disintegration by atg15 is critical to life span extension. This is Putative lipase atg15 (atg15) from Aspergillus fumigatus (strain ATCC MYA-4609 / CBS 101355 / FGSC A1100 / Af293) (Neosartorya fumigata).